We begin with the raw amino-acid sequence, 58 residues long: uncharacterized protein (58 aa).

4Fe-4S ferredoxin-type domains follow at residues 2–27 (GIKI…IKTY) and 28–57 (GVAI…VDTS). [4Fe-4S] cluster contacts are provided by C9, C12, C15, C19, C37, C40, C43, and C47.

[4Fe-4S] cluster serves as cofactor.

Its function is as follows. Ferredoxins are iron-sulfur proteins that transfer electrons probably in the CO-dehydrogenase complex. This is an uncharacterized protein from Methanocaldococcus jannaschii (strain ATCC 43067 / DSM 2661 / JAL-1 / JCM 10045 / NBRC 100440) (Methanococcus jannaschii).